A 614-amino-acid polypeptide reads, in one-letter code: 1-deoxy-D-xylulose-5-phosphate synthase (614 aa).

Thiamine diphosphate contacts are provided by residues His74 and 115 to 117; that span reads AHS. Position 146 (Asp146) interacts with Mg(2+). Residues 147–148, Asn175, Tyr282, and Glu363 each bind thiamine diphosphate; that span reads GA. Asn175 is a binding site for Mg(2+).

Belongs to the transketolase family. DXPS subfamily. As to quaternary structure, homodimer. It depends on Mg(2+) as a cofactor. Requires thiamine diphosphate as cofactor.

The catalysed reaction is D-glyceraldehyde 3-phosphate + pyruvate + H(+) = 1-deoxy-D-xylulose 5-phosphate + CO2. It participates in metabolic intermediate biosynthesis; 1-deoxy-D-xylulose 5-phosphate biosynthesis; 1-deoxy-D-xylulose 5-phosphate from D-glyceraldehyde 3-phosphate and pyruvate: step 1/1. Catalyzes the acyloin condensation reaction between C atoms 2 and 3 of pyruvate and glyceraldehyde 3-phosphate to yield 1-deoxy-D-xylulose-5-phosphate (DXP). The chain is 1-deoxy-D-xylulose-5-phosphate synthase from Nitrosomonas europaea (strain ATCC 19718 / CIP 103999 / KCTC 2705 / NBRC 14298).